A 123-amino-acid polypeptide reads, in one-letter code: Small ribosomal subunit protein uS12 (123 aa).

Aspartate 89 carries the 3-methylthioaspartic acid modification.

It belongs to the universal ribosomal protein uS12 family. Part of the 30S ribosomal subunit. Contacts proteins S8 and S17. May interact with IF1 in the 30S initiation complex.

With S4 and S5 plays an important role in translational accuracy. Its function is as follows. Interacts with and stabilizes bases of the 16S rRNA that are involved in tRNA selection in the A site and with the mRNA backbone. Located at the interface of the 30S and 50S subunits, it traverses the body of the 30S subunit contacting proteins on the other side and probably holding the rRNA structure together. The combined cluster of proteins S8, S12 and S17 appears to hold together the shoulder and platform of the 30S subunit. The polypeptide is Small ribosomal subunit protein uS12 (Granulibacter bethesdensis (strain ATCC BAA-1260 / CGDNIH1)).